The sequence spans 193 residues: Molybdopterin synthase catalytic subunit (193 aa).

Substrate contacts are provided by residues 118–119, Lys-134, and 141–143; these read HR and KKE. The interval 159 to 193 is disordered; it reads DRTTTDGTTASSPAPATRPAKGGGCCGRKVRVNES. Positions 163–178 are enriched in low complexity; that stretch reads TDGTTASSPAPATRPA.

This sequence belongs to the MoaE family. MOCS2B subfamily. As to quaternary structure, heterotetramer; composed of 2 small (MOCS2A) and 2 large (MOCS2B) subunits.

It localises to the cytoplasm. The enzyme catalyses 2 [molybdopterin-synthase sulfur-carrier protein]-C-terminal-Gly-aminoethanethioate + cyclic pyranopterin phosphate + H2O = molybdopterin + 2 [molybdopterin-synthase sulfur-carrier protein]-C-terminal Gly-Gly + 2 H(+). Its pathway is cofactor biosynthesis; molybdopterin biosynthesis. Its function is as follows. Catalytic subunit of the molybdopterin synthase complex, a complex that catalyzes the conversion of precursor Z into molybdopterin. Acts by mediating the incorporation of 2 sulfur atoms from thiocarboxylated MOCS2A into precursor Z to generate a dithiolene group. The sequence is that of Molybdopterin synthase catalytic subunit from Oryza sativa subsp. japonica (Rice).